A 217-amino-acid polypeptide reads, in one-letter code: Pyridoxine/pyridoxamine 5'-phosphate oxidase (217 aa).

Substrate-binding positions include 13–16 and K71; that span reads RREY. FMN-binding positions include 66-71, 81-82, R87, K88, and Q110; these read RIVLLK and YT. Y128, R132, and S136 together coordinate substrate. FMN contacts are provided by residues 145-146 and W190; that span reads QS. 196 to 198 is a binding site for substrate; the sequence is RLH. An FMN-binding site is contributed by R200.

This sequence belongs to the pyridoxamine 5'-phosphate oxidase family. As to quaternary structure, homodimer. FMN is required as a cofactor.

It carries out the reaction pyridoxamine 5'-phosphate + O2 + H2O = pyridoxal 5'-phosphate + H2O2 + NH4(+). The catalysed reaction is pyridoxine 5'-phosphate + O2 = pyridoxal 5'-phosphate + H2O2. It functions in the pathway cofactor metabolism; pyridoxal 5'-phosphate salvage; pyridoxal 5'-phosphate from pyridoxamine 5'-phosphate: step 1/1. It participates in cofactor metabolism; pyridoxal 5'-phosphate salvage; pyridoxal 5'-phosphate from pyridoxine 5'-phosphate: step 1/1. Functionally, catalyzes the oxidation of either pyridoxine 5'-phosphate (PNP) or pyridoxamine 5'-phosphate (PMP) into pyridoxal 5'-phosphate (PLP). The polypeptide is Pyridoxine/pyridoxamine 5'-phosphate oxidase (Proteus mirabilis (strain HI4320)).